A 353-amino-acid polypeptide reads, in one-letter code: Probable dual-specificity RNA methyltransferase RlmN (353 aa).

Glu-104 acts as the Proton acceptor in catalysis. Positions 112-341 (DGGRKTICIS…ILNRRSPGKD (230 aa)) constitute a Radical SAM core domain. Residues Cys-119 and Cys-346 are joined by a disulfide bond. 3 residues coordinate [4Fe-4S] cluster: Cys-126, Cys-130, and Cys-133. S-adenosyl-L-methionine is bound by residues 173–174 (GE), Ser-205, 228–230 (SLN), and Asn-304. Cys-346 functions as the S-methylcysteine intermediate in the catalytic mechanism.

Belongs to the radical SAM superfamily. RlmN family. It depends on [4Fe-4S] cluster as a cofactor.

It is found in the cytoplasm. The catalysed reaction is adenosine(2503) in 23S rRNA + 2 reduced [2Fe-2S]-[ferredoxin] + 2 S-adenosyl-L-methionine = 2-methyladenosine(2503) in 23S rRNA + 5'-deoxyadenosine + L-methionine + 2 oxidized [2Fe-2S]-[ferredoxin] + S-adenosyl-L-homocysteine. It carries out the reaction adenosine(37) in tRNA + 2 reduced [2Fe-2S]-[ferredoxin] + 2 S-adenosyl-L-methionine = 2-methyladenosine(37) in tRNA + 5'-deoxyadenosine + L-methionine + 2 oxidized [2Fe-2S]-[ferredoxin] + S-adenosyl-L-homocysteine. Its function is as follows. Specifically methylates position 2 of adenine 2503 in 23S rRNA and position 2 of adenine 37 in tRNAs. This Leptospira interrogans serogroup Icterohaemorrhagiae serovar copenhageni (strain Fiocruz L1-130) protein is Probable dual-specificity RNA methyltransferase RlmN.